Here is a 96-residue protein sequence, read N- to C-terminus: Co-chaperonin GroES (96 aa).

It belongs to the GroES chaperonin family. Heptamer of 7 subunits arranged in a ring. Interacts with the chaperonin GroEL.

It is found in the cytoplasm. Functionally, together with the chaperonin GroEL, plays an essential role in assisting protein folding. The GroEL-GroES system forms a nano-cage that allows encapsulation of the non-native substrate proteins and provides a physical environment optimized to promote and accelerate protein folding. GroES binds to the apical surface of the GroEL ring, thereby capping the opening of the GroEL channel. The chain is Co-chaperonin GroES from Solidesulfovibrio magneticus (strain ATCC 700980 / DSM 13731 / RS-1) (Desulfovibrio magneticus).